A 108-amino-acid polypeptide reads, in one-letter code: Insulin (108 aa).

Positions 1–24 (MALWMHLLPLLALLALWGPEPAPA) are cleaved as a signal peptide. Intrachain disulfides connect C31/C94, C43/C107, and C93/C98. The propeptide at 57–85 (EAEDLQVGQVELGGGSITGSLPPLEGPMQ) is c peptide.

This sequence belongs to the insulin family. Heterodimer of a B chain and an A chain linked by two disulfide bonds.

Its subcellular location is the secreted. Its function is as follows. Insulin decreases blood glucose concentration. It increases cell permeability to monosaccharides, amino acids and fatty acids. It accelerates glycolysis, the pentose phosphate cycle, and glycogen synthesis in liver. The protein is Insulin (INS) of Aotus trivirgatus (Three-striped night monkey).